The primary structure comprises 500 residues: Hexose transporter 1 (500 aa).

The Cytoplasmic segment spans residues 1-25 (MKNSNEISSSQSLKNNGSDGFFNTS). A helical membrane pass occupies residues 26-46 (LMYVLAACLASFLFGYQVSVL). The Extracellular portion of the chain corresponds to 47–75 (NTIKDFIVIEFGWCAGKEVNCDDSTLKSS). A disulfide bridge connects residues C60 and C67. Residues 76 to 96 (FLLASVFIGAVVGSGFSGFLV) form a helical membrane-spanning segment. The Cytoplasmic portion of the chain corresponds to 97-101 (QHGRR). Residues 102–122 (FSLLVIYNFFILVSILTSITH) traverse the membrane as a helical segment. Residues 123–131 (HFHTILFSR) lie on the Extracellular side of the membrane. The chain crosses the membrane as a helical span at residues 132–152 (LLSGFGIGLITVSVPMYISEM). Over 153-166 (THKDKKGAYGVLHQ) the chain is Cytoplasmic. Q166 lines the alpha-D-glucose pocket. Residue Q166 coordinates beta-D-glucose. Residues 167–187 (LFITFGIFIAVLLGMAMGNVP) traverse the membrane as a helical segment. The Extracellular portion of the chain corresponds to 188–203 (EEVNNPLGTFQQIWWR). A helical membrane pass occupies residues 204–224 (LMFFFPCIISILGIVLLTFFF). Residues 225-289 (KEETPYYLFE…RAMKIPSYRY (65 aa)) lie on the Cytoplasmic side of the membrane. A helical transmembrane segment spans residues 290 to 310 (VILLGCILSGLQQFTGINVLV). Alpha-D-glucose is bound by residues Q301, Q302, and N307. Beta-D-glucose is bound at residue Q301. N307 is a binding site for beta-D-glucose. Over 311–327 (SNSNALYKGFLTNEWIT) the chain is Extracellular. A helical transmembrane segment spans residues 328 to 348 (TLSVIMTVVNFLMTFPAIYIV). Beta-D-glucose is bound at residue N337. The Cytoplasmic portion of the chain corresponds to 349-356 (EKLGRKTL). A helical membrane pass occupies residues 357-377 (LLCGCAGIVCAFLPTAIANLI). The Extracellular portion of the chain corresponds to 378–390 (NNTSDVVKKLSIS). A helical membrane pass occupies residues 391 to 411 (ATFVMIVSFAVSYGPVLWIYL). W408 is an alpha-D-glucose binding site. The Cytoplasmic portion of the chain corresponds to 412–425 (HEMFPSEIKDSAAS). Residues 426–446 (LASLVNWMCAIIVVFPSDIII) traverse the membrane as a helical segment. The Extracellular portion of the chain corresponds to 447–451 (KQSPT). The chain crosses the membrane as a helical span at residues 452 to 472 (ILFFIFSGMSIVAFLFIFFFI). The Cytoplasmic portion of the chain corresponds to 473–500 (KETKGGEIGTSPYITLEERQKHMGKSVV).

Belongs to the major facilitator superfamily. Sugar transporter (TC 2.A.1.1) family. In terms of assembly, homodimer.

It localises to the cell membrane. It carries out the reaction D-glucose(out) = D-glucose(in). It catalyses the reaction D-fructose(out) = D-fructose(in). The enzyme catalyses D-galactose(in) = D-galactose(out). The catalysed reaction is D-mannose(out) = D-mannose(in). It carries out the reaction D-glucosamine(out) = D-glucosamine(in). It catalyses the reaction D-xylose(out) = D-xylose(in). With respect to regulation, inhibited by cytochalasin B. In terms of biological role, sodium-independent facilitative hexose transporter. Can transport D-glucose and D-fructose. Can transport D-mannose, D-galactose, D-xylose and D-glucosamine. The chain is Hexose transporter 1 from Plasmodium knowlesi.